Reading from the N-terminus, the 302-residue chain is ATP synthase subunit a (302 aa).

Helical transmembrane passes span 61-81 (VDSLAWSGGLGIIMCLLFWLG), 119-139 (IAPLSLVIFCWVFLMNLMDLI), 148-168 (FEWVMVTFFGWSAHEAYFKIV), 172-192 (DPNITLGMSFSVMFLIIFLTI), 214-234 (PVVKALLIPINLLLETIALLA), 252-272 (FVFILLAAMMGTWQFIGAWPW), and 273-293 (AVFHILVITLQAFIFMVLTIV).

Belongs to the ATPase A chain family. F-type ATPases have 2 components, CF(1) - the catalytic core - and CF(0) - the membrane proton channel. CF(1) has five subunits: alpha(3), beta(3), gamma(1), delta(1), epsilon(1). CF(0) has three main subunits: a(1), b(2) and c(9-12). The alpha and beta chains form an alternating ring which encloses part of the gamma chain. CF(1) is attached to CF(0) by a central stalk formed by the gamma and epsilon chains, while a peripheral stalk is formed by the delta and b chains.

It localises to the cell inner membrane. Its function is as follows. Key component of the proton channel; it plays a direct role in the translocation of protons across the membrane. The chain is ATP synthase subunit a from Alcanivorax borkumensis (strain ATCC 700651 / DSM 11573 / NCIMB 13689 / SK2).